A 793-amino-acid chain; its full sequence is RNA-binding protein spenito (793 aa).

Disordered regions lie at residues 1 to 93 (MSSH…PPAE) and 243 to 296 (HHDY…KKDK). Over residues 25 to 42 (SRSPGPASRSSLSRNSRS) the composition is skewed to low complexity. Over residues 257–268 (RGGHPHHLHGHA) the composition is skewed to basic residues. The span at 285–296 (APYEKPESKKDK) shows a compositional bias: basic and acidic residues. RRM domains are found at residues 314-391 (RTLF…YGKV) and 395-469 (TRMW…FAEL). Residues 507 to 623 (YAPRGGYSPY…RNDALASAST (117 aa)) form a disordered region. Residues 526–536 (GGYRGRGRGMY) show a composition bias toward basic residues. Residues 566-593 (DEWRRPPGESYDRGARSSSREPGVERSR) are compositionally biased toward basic and acidic residues. Residues 624-791 (VPDVARKCST…HLVIVVVRGG (168 aa)) form the SPOC domain.

Belongs to the RRM Spen family. In terms of assembly, component of the WMM complex, a N6-methyltransferase complex composed of a catalytic subcomplex, named MAC, and of an associated subcomplex, named MACOM. The MAC subcomplex is composed of Ime4/Mettl3 and Mettl14. The MACOM subcomplex is composed of fl(2)d, Flacc/Xio, Hakai, vir, and, in some cases of nito. Interacts with Sxl. Interacts with Hipk; leading to phosphorylation. Phosphorylated by Hipk at Ser-23, Ser-25 and/or Ser-27; the precise position if phosphorylation sites is unknown. Widely expressed. Shows some enrichment in the central nervous system.

It localises to the nucleus. Its function is as follows. RNA-binding protein that acts as an associated component of the WMM complex, a complex that mediates N6-methyladenosine (m6A) methylation of mRNAs. M6a modification plays a role in the efficiency of mRNA splicing and is required for sex determination. In the WMM complex, may act by binding target RNAs and recruiting the WMM complex. Required for sex determination and dosage compensation via Sxl alternative splicing: m6A methylation acts as a key regulator of Sxl pre-mRNA and promotes female-specific alternative splicing of Sxl, which determines female physiognomy. M6A methylation is also required for neuronal functions. Acts as a positive regulator of canonical Wg signaling during wing disk and eye development. In Drosophila melanogaster (Fruit fly), this protein is RNA-binding protein spenito.